Here is a 424-residue protein sequence, read N- to C-terminus: Double homeobox protein 4 (424 aa).

Polar residues predominate over residues 1-10; the sequence is MALPTPSDST. Disordered stretches follow at residues 1-24, 72-102, 218-362, and 388-414; these read MALPTPSDSTLPAEARGRGRRRRL, SRQLRQHRRESRPWPGRRGPPEGRRKRTAVT, LQPS…LQEP, and QPLLETEAPGELEASEEAASLEAPLSE. DNA-binding regions (homeobox) lie at residues 19–78 and 94–153; these read GRRR…LRQH and GRRK…PGQG. A compositionally biased stretch (basic and acidic residues) spans 265–274; the sequence is KSREDRDPQR. Low complexity-rich tracts occupy residues 278–302 and 319–329; these read PGPCAVAQPGPAQAGPQGQGVLAPP and AGAAWEPQAGA. The segment at 327 to 424 is required for interaction with EP300 and CREBBP, and for transcriptional activation of target genes; that stretch reads AGAAPPPQPA…EEYRALLEEL (98 aa). An important for transcriptional activation of target genes region spans residues 405-424; sequence AASLEAPLSEEEYRALLEEL.

The protein belongs to the paired homeobox family. As to quaternary structure, binds DNA as a monomer. Interacts (via C-terminus) with EP300 and CREBBP. In terms of tissue distribution, isoform 1: Does not seem to be expressed in normal muscle, but is detected in muscle of individuals with FSHD, and also in testis (at protein level). Isoform 1: Does not seem to be expressed in normal muscle, but in muscle of individuals with FSHD, where it may be toxic to cells. Isoform 2: Detected in skeletal muscle, fibroblasts and testis from healthy individuals.

It localises to the nucleus. Its subcellular location is the cytoplasm. Functionally, transcription factor that is selectively and transiently expressed in cleavage-stage embryos. Binds to double-stranded DNA elements with the consensus sequence 5'-TAATCTAATCA-3'. Binds to chromatin containing histone H3 acetylated at 'Lys-27' (H3K27ac) and promotes deacetylation of H3K27ac. In parallel, binds to chromatin that lacks histone H3 acetylation at 'Lys-27' (H3K27ac) and recruits EP300 and CREBBP to promote acetylation of histone H3 at 'Lys-27' at new sites. Involved in transcriptional regulation of numerous genes, primarily as transcriptional activator, but also mediates repression of a set of target genes. Promotes expression of ZSCAN4 and KDM4E, two proteins with essential roles during early embryogenesis. Promotes nuclear translocation of CTNNB1/beta-catenin and its subsequent activation of target genes. Heterologous expression in cultured embryonic stem cells mediates transcription of HERVL retrotransposons and transcripts derived from ACRO1 and HSATII satellite repeats. May activate expression of PITX1. May regulate microRNA (miRNA) expression. Inappropriate expression can inhibit myogenesis and promote apoptosis. Its function is as follows. Probably inactive as a transcriptional activator, due to the absence of the C-terminal region that is important for transcriptional activation. Can inhibit transcriptional activation mediated by isoform 1. Heterologous expression of isoform 2 has no deleterious effect on cell survival. The protein is Double homeobox protein 4 of Homo sapiens (Human).